A 357-amino-acid chain; its full sequence is Peptide chain release factor 1 (357 aa).

Position 234 is an N5-methylglutamine (glutamine 234). The tract at residues 282 to 313 (DSKKQEQRSNNRKQQVGSGDRSERIRTYNFPQ) is disordered.

This sequence belongs to the prokaryotic/mitochondrial release factor family. Methylated by PrmC. Methylation increases the termination efficiency of RF1.

It is found in the cytoplasm. Its function is as follows. Peptide chain release factor 1 directs the termination of translation in response to the peptide chain termination codons UAG and UAA. The protein is Peptide chain release factor 1 of Borreliella afzelii (strain PKo) (Borrelia afzelii).